Here is a 277-residue protein sequence, read N- to C-terminus: Orotidine 5'-phosphate decarboxylase (277 aa).

Substrate is bound by residues D40, 62 to 64, 93 to 102, Y229, and R247; these read KTH and DRKFIDIGNT. K95 functions as the Proton donor in the catalytic mechanism.

This sequence belongs to the OMP decarboxylase family.

The enzyme catalyses orotidine 5'-phosphate + H(+) = UMP + CO2. It participates in pyrimidine metabolism; UMP biosynthesis via de novo pathway; UMP from orotate: step 2/2. In Aspergillus oryzae (strain ATCC 42149 / RIB 40) (Yellow koji mold), this protein is Orotidine 5'-phosphate decarboxylase (pyrG).